The sequence spans 229 residues: Homeobox-leucine zipper protein HOX3 (229 aa).

A disordered region spans residues 1–82; it reads MMGATSPSGL…GPHRPKKLRL (82 aa). A compositionally biased stretch (acidic residues) spans 52-68; that stretch reads GEEEEFPMGSVEEDEEE. The homeobox DNA-binding region spans 75 to 134; the sequence is HRPKKLRLSKEQSRLLEESFRLNHTLTPKQKEALAIKLKLRPRQVEVWFQNRRARTKLKQ. The interval 133–177 is leucine-zipper; sequence KQTEMECEYLKRCFGSLTEENRRLQREVEELRAMRVAPPTVLSPH. Residues 198–229 form a disordered region; it reads AATGPPAVRPPPSSAAAAAPSPFHPRRPSAAF.

This sequence belongs to the HD-ZIP homeobox family. Class II subfamily. Homodimer. May form a heterodimer with HOX1, HOX2 or HOX7. Expressed in seedlings, roots, leaves, nodes, internodes, flowers and embryo.

It localises to the nucleus. Probable transcription repressor that binds to the DNA sequence 5'-CAAT[GC]ATTG-3'. The sequence is that of Homeobox-leucine zipper protein HOX3 (HOX3) from Oryza sativa subsp. indica (Rice).